A 1183-amino-acid chain; its full sequence is DNA-directed RNA polymerase subunit beta (1183 aa).

Residues 1151–1162 show a composition bias toward acidic residues; it reads EIEMADVDDEDA. A disordered region spans residues 1151-1183; it reads EIEMADVDDEDAAERKVDLQQKSAPESQKETTD.

The protein belongs to the RNA polymerase beta chain family. As to quaternary structure, the RNAP catalytic core consists of 2 alpha, 1 beta, 1 beta' and 1 omega subunit. When a sigma factor is associated with the core the holoenzyme is formed, which can initiate transcription.

It carries out the reaction RNA(n) + a ribonucleoside 5'-triphosphate = RNA(n+1) + diphosphate. DNA-dependent RNA polymerase catalyzes the transcription of DNA into RNA using the four ribonucleoside triphosphates as substrates. This Staphylococcus epidermidis (strain ATCC 12228 / FDA PCI 1200) protein is DNA-directed RNA polymerase subunit beta.